The sequence spans 375 residues: MLDRDVGPTPMYPPTYLEPGIGRHTPYGNQTDYRIFELNKRLQNWTEECDNLWWDAFTTEFFEDDAMLTITFCLEDGPKRYTIGRTLIPRYFRSIFEGGATELYYVLKHPKESFHNNFVSLDCDQCTMVTQHGKPMFTQVCVEGRLYLEFMFDDMMRIKTWHFSIRQHRELIPRSILAMHAQDPQMLDQLSKNITRCGLSNSTLNYLRLCVILEPMQELMSRHKTYSLSPRDCLKTCLFQKWQRMVAPPAEPARQAPSKRRKRKMSGGSTMSSGGGNTNNSNSKKKSPASTFALSSQVPDVMVVGEPTLMGGEFGDEDERLITRLENTQFDAANGIDDEDSFNNSPALGANSPWNSKPPSSQESKSENPTSQASQ.

Disordered regions lie at residues 248 to 294 and 331 to 375; these read PPAE…TFAL and DAAN…QASQ. The span at 266–282 shows a compositional bias: low complexity; sequence SGGSTMSSGGGNTNNSN. The region spanning 300-339 is the LIM interaction domain (LID) domain; sequence DVMVVGEPTLMGGEFGDEDERLITRLENTQFDAANGIDDE.

It belongs to the LDB family. In terms of assembly, forms homodimers and heterodimers. Interacts with the LIM domain of LIM/homeobox factor lhx1/lim1, and with lhx3/lim3 and lhx5/lim5. Activates lhx1/lim1 by binding. The stoichiometry of lhx1/lim1 and ldb1 is important for their function and an excess of ldb1 can inhibit lhx1/lim1 function. When bound to lhx1/lim1, escapes degradation by rnf12. The N-terminus interacts with the N-terminal region of rnf12. Post-translationally, undergoes rnf12-mediated ubiquitin-proteasome-dependent degradation. Ubiquitously expressed in the early gastrula before localizing to the dorsal region of the vegetal hemisphere, which contains the Spemann organizer. Expressed in the CNS, pronephros and tail bud in neurula and tail-bud stage embryos. Expressed in multiple adult tissues including brain, heart, lung, stomach, intestine, liver, spleen, kidney, ovary, muscle and skin.

Its subcellular location is the nucleus. Functionally, binds to the LIM domain of a wide variety of LIM domain-containing transcription factors. Acts as a coactivator together with otx2 to stimulate lhx1/lim1-mediated activation of the gsc promoter in the Spemann organizer. Acts synergistically with lhx1/lim1 and ssbp in axis formation. The chain is LIM domain-binding protein 1 (ldb1) from Xenopus laevis (African clawed frog).